Here is a 330-residue protein sequence, read N- to C-terminus: Methionyl-tRNA formyltransferase (330 aa).

Residue 121-124 (SLLP) coordinates (6S)-5,6,7,8-tetrahydrofolate.

The protein belongs to the Fmt family.

It catalyses the reaction L-methionyl-tRNA(fMet) + (6R)-10-formyltetrahydrofolate = N-formyl-L-methionyl-tRNA(fMet) + (6S)-5,6,7,8-tetrahydrofolate + H(+). Attaches a formyl group to the free amino group of methionyl-tRNA(fMet). The formyl group appears to play a dual role in the initiator identity of N-formylmethionyl-tRNA by promoting its recognition by IF2 and preventing the misappropriation of this tRNA by the elongation apparatus. The protein is Methionyl-tRNA formyltransferase of Burkholderia cenocepacia (strain ATCC BAA-245 / DSM 16553 / LMG 16656 / NCTC 13227 / J2315 / CF5610) (Burkholderia cepacia (strain J2315)).